A 542-amino-acid chain; its full sequence is Chaperonin GroEL 1 (542 aa).

Residues 30-33 (TLGP), K51, 87-91 (DGTTT), G415, 480-482 (NAA), and D496 contribute to the ATP site.

Belongs to the chaperonin (HSP60) family. Forms a cylinder of 14 subunits composed of two heptameric rings stacked back-to-back. Interacts with the co-chaperonin GroES.

It is found in the cytoplasm. The enzyme catalyses ATP + H2O + a folded polypeptide = ADP + phosphate + an unfolded polypeptide.. Its function is as follows. Together with its co-chaperonin GroES, plays an essential role in assisting protein folding. The GroEL-GroES system forms a nano-cage that allows encapsulation of the non-native substrate proteins and provides a physical environment optimized to promote and accelerate protein folding. This is Chaperonin GroEL 1 from Nitrobacter winogradskyi (strain ATCC 25391 / DSM 10237 / CIP 104748 / NCIMB 11846 / Nb-255).